The chain runs to 88 residues: Carboxysome shell vertex protein CsoS4A (88 aa).

Positions 1–76 constitute a BMV domain; sequence MLICKVLKPL…SDLTIVGIID (76 aa).

It belongs to the CcmL/EutN family. CsoS4 subfamily. In terms of assembly, homopentamer.

It is found in the carboxysome. Functionally, probably forms vertices in the carboxysome, a polyhedral inclusion where RuBisCO (ribulose bisphosphate carboxylase, cbbL-cbbS) is sequestered. Has been modeled to induce curvature upon insertion into an otherwise flat hexagonal layer of major carboxysome subunits. Has not been identified in purified carboxysomes; it is expected to be present in very low amounts. The chain is Carboxysome shell vertex protein CsoS4A from Prochlorococcus marinus subsp. pastoris (strain CCMP1986 / NIES-2087 / MED4).